Here is a 51-residue protein sequence, read N- to C-terminus: Protein Tat (51 aa).

Over residues 1 to 25 the composition is skewed to polar residues; that stretch reads EAETATKSCSGRQANQVSLPKQPAS. The tract at residues 1–51 is disordered; sequence EAETATKSCSGRQANQVSLPKQPASQPRGDPTGPKESKKKVETETETDPVN. Lys-21 is covalently cross-linked (Glycyl lysine isopeptide (Lys-Gly) (interchain with G-Cter in ubiquitin)). The Cell attachment site motif lies at 28–30; the sequence is RGD. Over residues 33-43 the composition is skewed to basic and acidic residues; it reads GPKESKKKVET.

The protein belongs to the lentiviruses Tat family. Interacts with host CCNT1. Associates with the P-TEFb complex composed at least of Tat, P-TEFb (CDK9 and CCNT1), TAR RNA, RNA Pol II. Recruits the HATs CREBBP, TAF1/TFIID, EP300, PCAF and GCN5L2. Interacts with host KAT5/Tip60; this interaction targets the latter to degradation. Interacts with the host deacetylase SIRT1. Interacts with host capping enzyme RNGTT; this interaction stimulates RNGTT. Binds to host KDR, and to the host integrins ITGAV/ITGB3 and ITGA5/ITGB1. Interacts with host KPNB1/importin beta-1 without previous binding to KPNA1/importin alpha-1. Interacts with EIF2AK2. Interacts with host nucleosome assembly protein NAP1L1; this interaction may be required for the transport of Tat within the nucleus, since the two proteins interact at the nuclear rim. Interacts with host C1QBP/SF2P32; this interaction involves lysine-acetylated Tat. Interacts with the host chemokine receptors CCR2, CCR3 and CXCR4. Interacts with host DPP4/CD26; this interaction may trigger an anti-proliferative effect. Interacts with host LDLR. Interacts with the host extracellular matrix metalloproteinase MMP1. Interacts with host PRMT6; this interaction mediates Tat's methylation. Interacts with, and is ubiquitinated by MDM2/Hdm2. Interacts with host PSMC3 and HTATIP2. Interacts with STAB1; this interaction may overcome SATB1-mediated repression of IL2 and IL2RA (interleukin) in T cells by binding to the same domain than HDAC1. Interacts (when acetylated) with human CDK13, thereby increasing HIV-1 mRNA splicing and promoting the production of the doubly spliced HIV-1 protein Nef. Acetylation by EP300, CREBBP, GCN5L2/GCN5 and PCAF regulates the transactivation activity of Tat. Post-translationally, phosphorylated by EIF2AK2 on serine and threonine residues adjacent to the basic region important for TAR RNA binding and function. Phosphorylation of Tat by EIF2AK2 is dependent on the prior activation of EIF2AK2 by dsRNA. In terms of processing, asymmetrical arginine methylation by host PRMT6 seems to diminish the transactivation capacity of Tat and affects the interaction with host CCNT1. Polyubiquitination by MDM2 does not target Tat to degradation, but activates its transactivation function and fosters interaction with CCNT1 and TAR RNA.

The protein resides in the host nucleus. It localises to the host nucleolus. Its subcellular location is the host cytoplasm. It is found in the secreted. In terms of biological role, transcriptional activator that increases RNA Pol II processivity, thereby increasing the level of full-length viral transcripts. Recognizes a hairpin structure at the 5'-LTR of the nascent viral mRNAs referred to as the transactivation responsive RNA element (TAR) and recruits the cyclin T1-CDK9 complex (P-TEFb complex) that will in turn hyperphosphorylate the RNA polymerase II to allow efficient elongation. The CDK9 component of P-TEFb and other Tat-activated kinases hyperphosphorylate the C-terminus of RNA Pol II that becomes stabilized and much more processive. Other factors such as HTATSF1/Tat-SF1, SUPT5H/SPT5, and HTATIP2 are also important for Tat's function. Besides its effect on RNA Pol II processivity, Tat induces chromatin remodeling of proviral genes by recruiting the histone acetyltransferases (HATs) CREBBP, EP300 and PCAF to the chromatin. This also contributes to the increase in proviral transcription rate, especially when the provirus integrates in transcriptionally silent region of the host genome. To ensure maximal activation of the LTR, Tat mediates nuclear translocation of NF-kappa-B by interacting with host RELA. Through its interaction with host TBP, Tat may also modulate transcription initiation. Tat can reactivate a latently infected cell by penetrating in it and transactivating its LTR promoter. In the cytoplasm, Tat is thought to act as a translational activator of HIV-1 mRNAs. Its function is as follows. Extracellular circulating Tat can be endocytosed by surrounding uninfected cells via the binding to several surface receptors such as CD26, CXCR4, heparan sulfate proteoglycans (HSPG) or LDLR. Neurons are rarely infected, but they internalize Tat via their LDLR. Endosomal low pH allows Tat to cross the endosome membrane to enter the cytosol and eventually further translocate into the nucleus, thereby inducing severe cell dysfunctions ranging from cell activation to cell death. Through its interaction with nuclear HATs, Tat is potentially able to control the acetylation-dependent cellular gene expression. Tat seems to inhibit the HAT activity of KAT5/Tip60 and TAF1, and consequently modify the expression of specific cellular genes. Modulates the expression of many cellular genes involved in cell survival, proliferation or in coding for cytokines (such as IL10) or cytokine receptors. May be involved in the derepression of host interleukin IL2 expression. Mediates the activation of cyclin-dependent kinases and dysregulation of microtubule network. Tat plays a role in T-cell and neurons apoptosis. Tat induced neurotoxicity and apoptosis probably contribute to neuroAIDS. Host extracellular matrix metalloproteinase MMP1 cleaves Tat and decreases Tat's mediated neurotoxicity. Circulating Tat also acts as a chemokine-like and/or growth factor-like molecule that binds to specific receptors on the surface of the cells, affecting many cellular pathways. In the vascular system, Tat binds to ITGAV/ITGB3 and ITGA5/ITGB1 integrins dimers at the surface of endothelial cells and competes with bFGF for heparin-binding sites, leading to an excess of soluble bFGF. Binds to KDR/VEGFR-2. All these Tat-mediated effects enhance angiogenesis in Kaposi's sarcoma lesions. This chain is Protein Tat, found in Homo sapiens (Human).